The primary structure comprises 1031 residues: Serine-repeat antigen protein 6 (1031 aa).

A signal peptide spans Met-1–Gly-24. Residue Asn-74 is glycosylated (N-linked (GlcNAc...) asparagine). A compositionally biased stretch (low complexity) spans Lys-91–Gly-101. The tract at residues Lys-91–Lys-163 is disordered. Over residues Val-104 to Met-139 the composition is skewed to polar residues. A glycan (N-linked (GlcNAc...) asparagine) is linked at Asn-120. The span at Ser-140–Ser-158 shows a compositional bias: low complexity. Asn-449 carries N-linked (GlcNAc...) asparagine glycosylation. The interval Thr-490–Asp-567 is disordered. Residues Pro-492–Ser-505 are compositionally biased toward low complexity. The segment covering Asn-511–Lys-535 has biased composition (basic and acidic residues). Asn-544 carries an N-linked (GlcNAc...) asparagine glycan. Positions Asn-554 to Tyr-564 are enriched in low complexity. The N-linked (GlcNAc...) asparagine glycan is linked to Asn-573. Cys-644 is a catalytic residue. Residue Asn-674 is glycosylated (N-linked (GlcNAc...) asparagine). Residues His-810 and Asn-835 contribute to the active site. Asn-929 and Asn-974 each carry an N-linked (GlcNAc...) asparagine glycan.

It belongs to the peptidase C1 family. In terms of processing, just prior to merozoite egress from host erythrocytes, proteolytically cleaved by SUB1 to generate the active 75kDa form.

It is found in the parasitophorous vacuole lumen. It localises to the parasitophorous vacuole membrane. Cysteine protease which plays an essential role in merozoite egress from host erythrocytes. May cleave host SPTB/beta spectrin and ANK1/ankyrin-1 which disrupts host erythrocyte actin cytoskeleton and leads to host erythrocyte cell membrane rupture. In Plasmodium falciparum (isolate 3D7), this protein is Serine-repeat antigen protein 6.